A 235-amino-acid chain; its full sequence is Calcium-activated potassium channel subunit beta-2 (235 aa).

The interval 1 to 45 is ball and chain; the sequence is MFIWTSGRTSSSYRQDEKRNIYQKIRDHDLLDKRKTVTALKAGED. The Cytoplasmic portion of the chain corresponds to 1–46; sequence MFIWTSGRTSSSYRQDEKRNIYQKIRDHDLLDKRKTVTALKAGEDR. The helical transmembrane segment at 47–67 threads the bilayer; the sequence is AILLGLAMMVCSIMMYFLLGI. Residues 68-194 lie on the Extracellular side of the membrane; sequence TLLRSYMQSV…VILTKLYSSN (127 aa). 3 N-linked (GlcNAc...) asparagine glycosylation sites follow: N88, N96, and N119. Residues 195–215 traverse the membrane as a helical segment; sequence VLFHSLFWPTCMMAGGVAIVA. The Cytoplasmic segment spans residues 216–235; the sequence is MVKLTQYLSLLCERIQRINR.

This sequence belongs to the KCNMB (TC 8.A.14.1) family. KCNMB2 subfamily. As to quaternary structure, interacts with KCNMA1 tetramer. There are probably 4 molecules of KCMNB2 per KCNMA1 tetramer. In terms of processing, N-glycosylated.

The protein localises to the membrane. Regulatory subunit of the calcium activated potassium KCNMA1 (maxiK) channel. Modulates the calcium sensitivity and gating kinetics of KCNMA1, thereby contributing to KCNMA1 channel diversity. Acts as a negative regulator that confers rapid and complete inactivation of KCNMA1 channel complex. In Mus musculus (Mouse), this protein is Calcium-activated potassium channel subunit beta-2 (Kcnmb2).